We begin with the raw amino-acid sequence, 275 residues long: 2,3,4,5-tetrahydropyridine-2,6-dicarboxylate N-succinyltransferase (275 aa).

Residues Arg-106 and Asp-143 each contribute to the substrate site.

The protein belongs to the transferase hexapeptide repeat family. In terms of assembly, homotrimer.

Its subcellular location is the cytoplasm. The catalysed reaction is (S)-2,3,4,5-tetrahydrodipicolinate + succinyl-CoA + H2O = (S)-2-succinylamino-6-oxoheptanedioate + CoA. It participates in amino-acid biosynthesis; L-lysine biosynthesis via DAP pathway; LL-2,6-diaminopimelate from (S)-tetrahydrodipicolinate (succinylase route): step 1/3. The sequence is that of 2,3,4,5-tetrahydropyridine-2,6-dicarboxylate N-succinyltransferase from Cupriavidus pinatubonensis (strain JMP 134 / LMG 1197) (Cupriavidus necator (strain JMP 134)).